The following is a 68-amino-acid chain: MTQTEIIITVAACLIVLAQGIFLFIDAKKRNHMAWVWGIVGLIQAPMPLICYYFFVIRPDRKKRGIKQ.

A run of 2 helical transmembrane segments spans residues 5–25 (EIIITVAACLIVLAQGIFLFI) and 37–57 (WGIVGLIQAPMPLICYYFFVI).

It is found in the cell membrane. Functionally, together with YxlE, is important for negative regulation of sigma Y activity, being the major negative regulator. The chain is Negative regulatory protein YxlD (yxlD) from Bacillus subtilis (strain 168).